The primary structure comprises 118 residues: Small ribosomal subunit protein uS13 (118 aa).

Positions 94 to 118 (GLPVRGQRTKTNARTRKGPRKPIKK) are disordered.

Belongs to the universal ribosomal protein uS13 family. As to quaternary structure, part of the 30S ribosomal subunit. Forms a loose heterodimer with protein S19. Forms two bridges to the 50S subunit in the 70S ribosome.

Located at the top of the head of the 30S subunit, it contacts several helices of the 16S rRNA. In the 70S ribosome it contacts the 23S rRNA (bridge B1a) and protein L5 of the 50S subunit (bridge B1b), connecting the 2 subunits; these bridges are implicated in subunit movement. Contacts the tRNAs in the A and P-sites. This chain is Small ribosomal subunit protein uS13, found in Edwardsiella ictaluri (strain 93-146).